Consider the following 477-residue polypeptide: Inner membrane protein YbhI (477 aa).

The Cytoplasmic portion of the chain corresponds to 1-5; that stretch reads MNKKS. A helical transmembrane segment spans residues 6 to 26; the sequence is LWKLILILAIPCIIGFMPAPA. Gly27 is a topological domain (periplasmic). The helical transmembrane segment at 28-48 threads the bilayer; the sequence is LSELAWVLFGIYLAAIVGLVI. At 49-50 the chain is on the cytoplasmic side; it reads KP. The chain crosses the membrane as a helical span at residues 51–71; sequence FPEPVVLLIAVAASMVVVGNL. Residues 72–87 lie on the Periplasmic side of the membrane; that stretch reads SDGAFKTTAVLSGYSS. The helical transmembrane segment at 88 to 108 threads the bilayer; sequence GTTWLVFSAFTLSAAFVTTGL. The Cytoplasmic portion of the chain corresponds to 109–148; sequence GKRIAYLLIGKIGNTTLGLGYVTVFLDLVLAPATPSNTAR. Residues 149-169 traverse the membrane as a helical segment; it reads AGGIVLPIINSVAVALGSEPE. The Periplasmic portion of the chain corresponds to 170-219; the sequence is KSPRRVGHYLMMSIYMVTKTTSYMFFTAMAGNILALKMINDILHLQISWG. A helical membrane pass occupies residues 220–240; the sequence is GWALAAGLPGIIMLLVTPLVI. Over 241-272 the chain is Cytoplasmic; the sequence is YTMYPPEIKKVDNKTIAKAGLAELGPMKIREK. Residues 273-293 traverse the membrane as a helical segment; sequence MLLGVFVLALLGWIFSKSLGV. The Periplasmic portion of the chain corresponds to 294 to 297; the sequence is DEST. Residues 298-318 form a helical membrane-spanning segment; it reads VAIVVMATMLLLGIVTWEDVV. The Cytoplasmic segment spans residues 319–356; the sequence is KNKGGWNTLIWYGGIIGLSSLLSKVKFFEWLAEVFKNN. Residues 357 to 377 form a helical membrane-spanning segment; that stretch reads LAFDGHGNVAFFVIIFLSIIV. Position 378 (Arg378) is a topological domain, periplasmic. A helical transmembrane segment spans residues 379–399; sequence YFFASGSAYIVAMLPVFAMLA. The Cytoplasmic portion of the chain corresponds to 400 to 445; it reads NVSGAPLMLTALALLFSNSYGGMVTHYGGAAGPVIFGVGYNDIKSW. Residues 446–466 traverse the membrane as a helical segment; it reads WLVGAVLTILTFLVHITLGVW. Over 467-477 the chain is Periplasmic; the sequence is WWNMLIGWNML.

This sequence belongs to the SLC13A/DASS transporter (TC 2.A.47) family. DIT1 subfamily.

It localises to the cell inner membrane. This Escherichia coli (strain K12) protein is Inner membrane protein YbhI (ybhI).